A 213-amino-acid polypeptide reads, in one-letter code: Small ribosomal subunit protein uS5 (213 aa).

The 64-residue stretch at 54–117 (LKSETVDVRL…RNAKLNIIPV (64 aa)) folds into the S5 DRBM domain.

It belongs to the universal ribosomal protein uS5 family. In terms of assembly, part of the 30S ribosomal subunit. Contacts protein S4.

Functionally, with S4 and S12 plays an important role in translational accuracy. This Hyperthermus butylicus (strain DSM 5456 / JCM 9403 / PLM1-5) protein is Small ribosomal subunit protein uS5.